We begin with the raw amino-acid sequence, 311 residues long: Pyrimidine-specific ribonucleoside hydrolase RihA (311 aa).

His240 is a catalytic residue.

This sequence belongs to the IUNH family. RihA subfamily.

Functionally, hydrolyzes cytidine or uridine to ribose and cytosine or uracil, respectively. This is Pyrimidine-specific ribonucleoside hydrolase RihA from Salmonella dublin (strain CT_02021853).